The following is a 675-amino-acid chain: Methionine--tRNA ligase (675 aa).

The 'HIGH' region signature appears at 15–25 (PYANGPIHLGH). Positions 146, 149, 159, and 162 each coordinate Zn(2+). Positions 332–336 (KMSKS) match the 'KMSKS' region motif. K335 serves as a coordination point for ATP. The 103-residue stretch at 573-675 (DFAKVDMRVA…SGAQPGMQVK (103 aa)) folds into the tRNA-binding domain.

This sequence belongs to the class-I aminoacyl-tRNA synthetase family. MetG type 1 subfamily. As to quaternary structure, homodimer. It depends on Zn(2+) as a cofactor.

It is found in the cytoplasm. It carries out the reaction tRNA(Met) + L-methionine + ATP = L-methionyl-tRNA(Met) + AMP + diphosphate. In terms of biological role, is required not only for elongation of protein synthesis but also for the initiation of all mRNA translation through initiator tRNA(fMet) aminoacylation. This Photorhabdus laumondii subsp. laumondii (strain DSM 15139 / CIP 105565 / TT01) (Photorhabdus luminescens subsp. laumondii) protein is Methionine--tRNA ligase.